The sequence spans 1152 residues: Alpha-mannosidase 2x (1152 aa).

At 1 to 5 (MKLKK) the chain is on the cytoplasmic side. The helical; Signal-anchor for type II membrane protein transmembrane segment at 6 to 26 (QVTVCGAAIFCVAVFSLYLML) threads the bilayer. Residues 27-796 (DRVQHDPARH…VDEEQEQQME (770 aa)) are Lumenal-facing. Residues 43–74 (PRSQISVLQNRIEQLEQLLEENHDIISRIKDS) adopt a coiled-coil conformation. Zn(2+) contacts are provided by His-175 and Asp-177. An N-linked (GlcNAc...) asparagine glycan is attached at Asn-225. Residue Asp-289 participates in Zn(2+) binding. Asp-289 functions as the Nucleophile in the catalytic mechanism. Asn-305 is a glycosylation site (N-linked (GlcNAc...) asparagine). His-569 contributes to the Zn(2+) binding site.

The protein belongs to the glycosyl hydrolase 38 family. Homodimer; disulfide-linked. Interacts with MGAT4D. Zn(2+) is required as a cofactor.

The protein localises to the golgi apparatus membrane. The enzyme catalyses N(4)-{beta-D-GlcNAc-(1-&gt;2)-alpha-D-Man-(1-&gt;3)-[alpha-D-Man-(1-&gt;3)-[alpha-D-Man-(1-&gt;6)]-alpha-D-Man-(1-&gt;6)]-beta-D-Man-(1-&gt;4)-beta-D-GlcNAc-(1-&gt;4)-beta-D-GlcNAc}-L-asparaginyl-[protein] + 2 H2O = 2 alpha-D-mannopyranose + an N(4)-{beta-D-GlcNAc-(1-&gt;2)-alpha-D-Man-(1-&gt;3)-[alpha-D-Man-(1-&gt;6)]-beta-D-Man-(1-&gt;4)-beta-D-GlcNAc-(1-&gt;4)-beta-D-GlcNAc}-L-asparaginyl-[protein]. It participates in protein modification; protein glycosylation. Catalyzes the first committed step in the biosynthesis of complex N-glycans. It controls conversion of high mannose to complex N-glycans; the final hydrolytic step in the N-glycan maturation pathway. The polypeptide is Alpha-mannosidase 2x (Man2a2) (Mus musculus (Mouse)).